We begin with the raw amino-acid sequence, 266 residues long: Probable metal transport system membrane protein TP_0036 (266 aa).

8 helical membrane-spanning segments follow: residues 10-30 (AFVA…HLVL), 34-54 (ALMG…AVSC), 56-76 (IHPG…IEFL), 88-108 (LSIV…SGLI), 120-140 (ILVV…FCVG), 172-192 (VASV…GILV), 211-231 (FLLT…LGLV), and 238-258 (VAPG…VIAL).

Belongs to the ABC-3 integral membrane protein family.

The protein resides in the cell inner membrane. Part of an ATP-driven transport system TP_0034/TP_0035/TP_0036 for a metal. The chain is Probable metal transport system membrane protein TP_0036 from Treponema pallidum (strain Nichols).